A 1111-amino-acid chain; its full sequence is Kinesin-like protein KIP1 (1111 aa).

Residues 1–11 show a composition bias toward polar residues; the sequence is MARSSLPNRRT. Positions 1 to 34 are disordered; the sequence is MARSSLPNRRTAQFEANKRRTIAHAPSPSLSNGM. Positions 52–410 constitute a Kinesin motor domain; the sequence is NIHVYVRCRS…LEYATRAKSI (359 aa). 141–148 lines the ATP pocket; the sequence is GQTGTGKT. Coiled coils occupy residues 424-510, 648-670, 710-780, and 808-828; these read TCLK…IIQN, KDLNEIYQSHQQFLKNLQNDIKS, KLIK…DQDI, and HNAENTLKTVSQNNESFTNDL. Over residues 1007 to 1016 the composition is skewed to basic and acidic residues; that stretch reads AENKSKDDTS. The disordered stretch occupies residues 1007–1111; sequence AENKSKDDTS…DILQNKKLHQ (105 aa). Polar residues-rich tracts occupy residues 1017-1038 and 1057-1082; these read NSRTCIPNLSTNENFPLSQFSP and SINSAKSNRSKTLPNTEGTGRESQNN.

It belongs to the TRAFAC class myosin-kinesin ATPase superfamily. Kinesin family. BimC subfamily. As to quaternary structure, might be dimeric.

The protein localises to the cytoplasm. Its subcellular location is the cytoskeleton. The protein resides in the spindle. Required for assembly of the mitotic spindle. Interacts with spindle microtubules to produce an outwardly directed force acting upon the poles. Following spindle assembly, CIN8 and KIP1 apparently act to oppose a force that draws separated poles back together. This force seems to be mediate by KAR3. The chain is Kinesin-like protein KIP1 (KIP1) from Saccharomyces cerevisiae (strain ATCC 204508 / S288c) (Baker's yeast).